The primary structure comprises 162 residues: Sec-independent protein translocase protein TatB (162 aa).

The helical transmembrane segment at methionine 1 to glycine 21 threads the bilayer. Residues isoleucine 86–serine 162 are disordered. Residues phenylalanine 108–proline 117 show a composition bias toward polar residues. Residues proline 123–threonine 135 are compositionally biased toward low complexity. Over residues aspartate 147–serine 162 the composition is skewed to polar residues.

The protein belongs to the TatB family. In terms of assembly, the Tat system comprises two distinct complexes: a TatABC complex, containing multiple copies of TatA, TatB and TatC subunits, and a separate TatA complex, containing only TatA subunits. Substrates initially bind to the TatABC complex, which probably triggers association of the separate TatA complex to form the active translocon.

The protein localises to the cell inner membrane. In terms of biological role, part of the twin-arginine translocation (Tat) system that transports large folded proteins containing a characteristic twin-arginine motif in their signal peptide across membranes. Together with TatC, TatB is part of a receptor directly interacting with Tat signal peptides. TatB may form an oligomeric binding site that transiently accommodates folded Tat precursor proteins before their translocation. This Hydrogenovibrio crunogenus (strain DSM 25203 / XCL-2) (Thiomicrospira crunogena) protein is Sec-independent protein translocase protein TatB.